Here is an 802-residue protein sequence, read N- to C-terminus: Acetyl-CoA decarbonylase/synthase complex subunit alpha 1 (802 aa).

[4Fe-4S] cluster-binding residues include C68, C71, C76, and C86. H109 lines the CO pocket. Residues H243, C271, and C310 each coordinate [Ni-4Fe-4S] cluster. 4Fe-4S ferredoxin-type domains follow at residues 395–424 and 435–464; these read DEAL…VDQG and SKLA…INVI. Residues C405, C408, C411, C415, C444, C447, C450, and C454 each contribute to the [4Fe-4S] cluster site. 3 residues coordinate [Ni-4Fe-4S] cluster: C512, C541, and C576.

The protein belongs to the Ni-containing carbon monoxide dehydrogenase family. Heterotetramer of two alpha and two epsilon subunits. The ACDS complex is made up of alpha, epsilon, beta, gamma and delta subunits with a probable stoichiometry of (alpha(2)epsilon(2))(4)-beta(8)-(gamma(1)delta(1))(8). It depends on [4Fe-4S] cluster as a cofactor. [Ni-4Fe-4S] cluster is required as a cofactor.

It catalyses the reaction CO + 2 oxidized [2Fe-2S]-[ferredoxin] + H2O = 2 reduced [2Fe-2S]-[ferredoxin] + CO2 + 2 H(+). Part of the ACDS complex that catalyzes the reversible cleavage of acetyl-CoA, allowing autotrophic growth from CO(2). The alpha-epsilon subcomponent functions as a carbon monoxide dehydrogenase. This is Acetyl-CoA decarbonylase/synthase complex subunit alpha 1 from Archaeoglobus fulgidus (strain ATCC 49558 / DSM 4304 / JCM 9628 / NBRC 100126 / VC-16).